Consider the following 609-residue polypeptide: Dihydroxyacetone kinase (609 aa).

Residues 8 to 355 (YKQDLVHAHL…LDYPTKVPGW (348 aa)) form the DhaK domain. Substrate-binding positions include 53 to 56 (GSGH), Lys104, and Asp109. His232 functions as the Tele-hemiaminal-histidine intermediate in the catalytic mechanism. One can recognise a DhaL domain in the interval 392–600 (STVKAVLESG…LAALVDGFAE (209 aa)). Residues 421-424 (DGDC), 467-468 (TS), 523-524 (TL), and 585-587 (DPG) contribute to the ATP site.

Belongs to the dihydroxyacetone kinase (DAK) family.

The enzyme catalyses dihydroxyacetone + ATP = dihydroxyacetone phosphate + ADP + H(+). It catalyses the reaction D-glyceraldehyde + ATP = D-glyceraldehyde 3-phosphate + ADP + H(+). It participates in polyol metabolism; glycerol fermentation; glycerone phosphate from glycerol (oxidative route): step 2/2. Functionally, catalyzes both the phosphorylation of dihydroxyacetone and of glyceraldehyde. This chain is Dihydroxyacetone kinase (DAK), found in Pichia angusta (Yeast).